A 124-amino-acid polypeptide reads, in one-letter code: Small ribosomal subunit protein uS12 (124 aa).

The residue at position 89 (Asp89) is a 3-methylthioaspartic acid.

It belongs to the universal ribosomal protein uS12 family. As to quaternary structure, part of the 30S ribosomal subunit. Contacts proteins S8 and S17. May interact with IF1 in the 30S initiation complex.

In terms of biological role, with S4 and S5 plays an important role in translational accuracy. Its function is as follows. Interacts with and stabilizes bases of the 16S rRNA that are involved in tRNA selection in the A site and with the mRNA backbone. Located at the interface of the 30S and 50S subunits, it traverses the body of the 30S subunit contacting proteins on the other side and probably holding the rRNA structure together. The combined cluster of proteins S8, S12 and S17 appears to hold together the shoulder and platform of the 30S subunit. The polypeptide is Small ribosomal subunit protein uS12 (Treponema pallidum subsp. pallidum (strain SS14)).